Consider the following 236-residue polypeptide: LexA repressor (236 aa).

Residues 26–46 constitute a DNA-binding region (H-T-H motif); sequence FDEMKDALDLRSKSGIHRLII. Residues S157 and K195 each act as for autocatalytic cleavage activity in the active site.

It belongs to the peptidase S24 family. As to quaternary structure, homodimer.

It carries out the reaction Hydrolysis of Ala-|-Gly bond in repressor LexA.. In terms of biological role, represses a number of genes involved in the response to DNA damage (SOS response), including recA and lexA. In the presence of single-stranded DNA, RecA interacts with LexA causing an autocatalytic cleavage which disrupts the DNA-binding part of LexA, leading to derepression of the SOS regulon and eventually DNA repair. The chain is LexA repressor from Methylocella silvestris (strain DSM 15510 / CIP 108128 / LMG 27833 / NCIMB 13906 / BL2).